A 326-amino-acid chain; its full sequence is Regulation of nuclear pre-mRNA domain-containing protein 1B (326 aa).

S2 is subject to N-acetylserine. Residues 2–133 (SSFSESALEK…QLKLSMEDSK (132 aa)) form the CID domain. The disordered stretch occupies residues 127–149 (LSMEDSKSPPPKATEEKKSLKRT). A compositionally biased stretch (basic and acidic residues) spans 128–144 (SMEDSKSPPPKATEEKK). Phosphoserine is present on residues S132 and S134. The residue at position 161 (Y161) is a Phosphotyrosine. A phosphoserine mark is found at S166 and S299.

This sequence belongs to the UPF0400 (RTT103) family. In terms of assembly, homodimer. May form a heterodimer with RPRD1A. Associates with RPAP2. Associates with the RNA polymerase II complex. In terms of tissue distribution, preferentially expressed in a range of tumor tissues including colon, lung, liver, breast, prostate, stomach, uterine endometrium and cervical cancers with higher levels in tumors than in adjacent non-tumor tissue (at protein level).

It is found in the nucleus. Functionally, interacts with phosphorylated C-terminal heptapeptide repeat domain (CTD) of the largest RNA polymerase II subunit POLR2A, and participates in dephosphorylation of the CTD by RPAP2. Transcriptional regulator which enhances expression of CCND1. Promotes binding of RNA polymerase II to the CCDN1 promoter and to the termination region before the poly-A site but decreases its binding after the poly-A site. Prevents RNA polymerase II from reading through the 3' end termination site and may allow it to be recruited back to the promoter through promotion of the formation of a chromatin loop. Also enhances the transcription of a number of other cell cycle-related genes including CDK2, CDK4, CDK6 and cyclin-E but not CDKN1A, CDKN1B or cyclin-A. Promotes cell proliferation. This Homo sapiens (Human) protein is Regulation of nuclear pre-mRNA domain-containing protein 1B (RPRD1B).